A 219-amino-acid chain; its full sequence is MKIAVITFPGSNCDSDIYRVLKDQYNAEVDRIWHRDGLDKKYELVILPGGFSYGDYLRSGAMAGFSPVMKSVKEHVDKGGKLFGICNGFQILTEAEYLPGALIRNKTLKYICKTVILTKGSAGNPVTASMDVRKELKIPIAHADGCYYATSDVLKQLEDEDRILFRYSGENPNGSLDSIAGITSKNFKIVGMMPHPERAMNPITGEMDGKVVLDLILGS.

The Glutamine amidotransferase type-1 domain maps to 2–219 (KIAVITFPGS…KVVLDLILGS (218 aa)). Cys86 (nucleophile) is an active-site residue. Active-site residues include His195 and Glu197.

Part of the FGAM synthase complex composed of 1 PurL, 1 PurQ and 2 PurS subunits.

It localises to the cytoplasm. It catalyses the reaction N(2)-formyl-N(1)-(5-phospho-beta-D-ribosyl)glycinamide + L-glutamine + ATP + H2O = 2-formamido-N(1)-(5-O-phospho-beta-D-ribosyl)acetamidine + L-glutamate + ADP + phosphate + H(+). It carries out the reaction L-glutamine + H2O = L-glutamate + NH4(+). It functions in the pathway purine metabolism; IMP biosynthesis via de novo pathway; 5-amino-1-(5-phospho-D-ribosyl)imidazole from N(2)-formyl-N(1)-(5-phospho-D-ribosyl)glycinamide: step 1/2. In terms of biological role, part of the phosphoribosylformylglycinamidine synthase complex involved in the purines biosynthetic pathway. Catalyzes the ATP-dependent conversion of formylglycinamide ribonucleotide (FGAR) and glutamine to yield formylglycinamidine ribonucleotide (FGAM) and glutamate. The FGAM synthase complex is composed of three subunits. PurQ produces an ammonia molecule by converting glutamine to glutamate. PurL transfers the ammonia molecule to FGAR to form FGAM in an ATP-dependent manner. PurS interacts with PurQ and PurL and is thought to assist in the transfer of the ammonia molecule from PurQ to PurL. This Leptospira interrogans serogroup Icterohaemorrhagiae serovar copenhageni (strain Fiocruz L1-130) protein is Phosphoribosylformylglycinamidine synthase subunit PurQ.